The following is a 692-amino-acid chain: Alpha-amylase SusG (692 aa).

Positions 1–22 are cleaved as a signal peptide; that stretch reads MNKHLHFLSLLWLSMLMAFMTA. Residue cysteine 23 is the site of N-palmitoyl cysteine attachment. Residue cysteine 23 is the site of S-diacylglycerol cysteine attachment. Mg(2+) contacts are provided by aspartate 73, aspartate 75, aspartate 77, tyrosine 79, and aspartate 81. Asparagine 153 provides a ligand contact to Ca(2+). Starch binding regions lie at residues histidine 154, 260 to 263, and 330 to 333; these read YYGE and NIMF. A Ca(2+)-binding site is contributed by aspartate 352. The segment at 386 to 392 is starch binding; sequence RLDAVKH. Aspartate 388 functions as the Nucleophile in the catalytic mechanism. Histidine 392 is a Ca(2+) binding site. The active-site Proton donor is the glutamate 431. 2 regions of interest (starch binding) are found at residues aspartate 437 and arginine 457.

This sequence belongs to the glycosyl hydrolase 13 family. Monomer. Ca(2+) serves as cofactor.

It is found in the cell outer membrane. The catalysed reaction is Endohydrolysis of (1-&gt;4)-alpha-D-glucosidic linkages in polysaccharides containing three or more (1-&gt;4)-alpha-linked D-glucose units.. It functions in the pathway glycan degradation; starch degradation. Its function is as follows. Alpha-amylase that cleaves starch into oligosaccharides before internalization for degradation, the first step in starch degradation. The polypeptide is Alpha-amylase SusG (susG) (Bacteroides thetaiotaomicron (strain ATCC 29148 / DSM 2079 / JCM 5827 / CCUG 10774 / NCTC 10582 / VPI-5482 / E50)).